A 687-amino-acid polypeptide reads, in one-letter code: Probable intron-encoded endonuclease aI3 (687 aa).

A COX1 exons 1 to 3 encoded region spans residues 1–374; that stretch reads MKQMSYVTRW…NASMDVAFHD (374 aa). 10 helical membrane passes run 19–39, 69–89, 103–123, 152–172, 188–208, 240–260, 273–293, 315–335, 341–361, and 376–396; these read IGMTYLGFGMLSAMMGTGMSV, LLMMFFFIMPVWMGAFGNFFL, LNNISFWCLPPALVCMVCSVL, AMFAMHLTSMSSLLGAMNFMV, PLFAWAMFLTAMLLLLSLPVL, LFWFFGHPEVYILMMPGFGVM, FGEMGMLYAMGSIGFLGFLVW, MVIAVPTGIKIFSWLATIYGG, VPMLFALGFLFLFTMGGLTGV, and IFIYYVSFFLYTLYNMYNNYT. Positions 375 to 687 are COX1 intron 3 encoded; that stretch reads RIFIYYVSFF…KKESLMKFLK (313 aa).

It in the C-terminal section; belongs to the LAGLIDADG endonuclease family. The protein in the N-terminal section; belongs to the heme-copper respiratory oxidase family. The mature protein may arise from proteolytic cleavage of an in-frame translation of COX1 exons 1 to 3 plus intron 3, containing the aI3 open reading frame.

The protein localises to the mitochondrion. The protein resides in the membrane. In terms of biological role, mitochondrial DNA endonuclease involved in intron homing. The chain is Probable intron-encoded endonuclease aI3 (aI3) from Debaryomyces hansenii (strain ATCC 36239 / CBS 767 / BCRC 21394 / JCM 1990 / NBRC 0083 / IGC 2968) (Yeast).